Here is an 850-residue protein sequence, read N- to C-terminus: Polyhomeotic-like protein 2 (850 aa).

Disordered regions lie at residues 1–79 (MENE…QYLQ), 233–314 (QQTP…RAVP), 335–386 (LPQP…DHAL), 402–436 (THVHKPGNSQQCHLPTLDTGSQNGHPEGGSHPPQR), and 528–553 (MTSGNGNSASSIAGTAPQNGENKPPQ). Residues 15 to 32 (SVTTNTSGTNSSSGCISS) are compositionally biased toward low complexity. Residues 33–56 (SGGGGGSGGRPTAPQISVYSGIPD) form an interaction with BMI1 region. The segment covering 343-352 (PQPQFVAQQQ) has biased composition (low complexity). 2 stretches are compositionally biased toward polar residues: residues 368–380 (LASVSPSLALQSS) and 402–425 (THVHKPGNSQQCHLPTLDTGSQNG). A compositionally biased stretch (low complexity) spans 529-543 (TSGNGNSASSIAGTA). The short motif at 550–579 (KPPQAIVKPQILTHVIEGFVIQEGAEPFPV) is the HD1 element. Glycyl lysine isopeptide (Lys-Gly) (interchain with G-Cter in SUMO2) cross-links involve residues K590 and K592. Positions 597 to 624 (FLPEKPPQQDHTTTTDSEMEEPYLQESK) are disordered. T611 bears the Phosphothreonine mark. Position 613 is a phosphoserine (S613). A Glycyl lysine isopeptide (Lys-Gly) (interchain with G-Cter in SUMO2) cross-link involves residue K624. The segment at 625 to 659 (EEGTPLKLKCELCGRVDFAYKFKRSKRFCSMACAK) adopts an FCS-type zinc-finger fold. C634, C637, C653, and C657 together coordinate Zn(2+). 2 disordered regions span residues 676–712 (RSKLQKAGTTTHNRRRASKASLPTLTKDTKKQPSGTV) and 725–764 (SQEDSSRCSDNSSYEEPLSPISASSSTSRRRQGQRDLDLP). K694 is covalently cross-linked (Glycyl lysine isopeptide (Lys-Gly) (interchain with G-Cter in SUMO2)). A compositionally biased stretch (polar residues) spans 696 to 712 (SLPTLTKDTKKQPSGTV). The residue at position 743 (S743) is a Phosphoserine. In terms of domain architecture, SAM spans 786–850 (WNVEDVYEFI…YARISMLKDS (65 aa)). A Glycyl lysine isopeptide (Lys-Gly) (interchain with G-Cter in SUMO2) cross-link involves residue K839.

Component of a PRC1-like complex. Interacts with CBX4. Interacts with BMI1, PCGF2, PHC1 and RNF2. Interacts with CHTOP. Interacts with the N-terminal region of the SP1 transcription factor and with MAPKAPK2. Interacts with SAMD7. Interacts with SAMD11. In terms of tissue distribution, isoform 2 is ubiquitously expressed in embryos and adult tissues at much higher level than isoform 1.

The protein localises to the nucleus. Component of a Polycomb group (PcG) multiprotein PRC1-like complex, a complex class required to maintain the transcriptionally repressive state of many genes, including Hox genes, throughout development. PcG PRC1 complex acts via chromatin remodeling and modification of histones; it mediates monoubiquitination of histone H2A 'Lys-119', rendering chromatin heritably changed in its expressibility. The chain is Polyhomeotic-like protein 2 (Phc2) from Mus musculus (Mouse).